The primary structure comprises 485 residues: Glutamyl-tRNA(Gln) amidotransferase subunit A (485 aa).

Active-site charge relay system residues include Lys79 and Ser154. The Acyl-ester intermediate role is filled by Ser178.

Belongs to the amidase family. GatA subfamily. As to quaternary structure, heterotrimer of A, B and C subunits.

The catalysed reaction is L-glutamyl-tRNA(Gln) + L-glutamine + ATP + H2O = L-glutaminyl-tRNA(Gln) + L-glutamate + ADP + phosphate + H(+). Allows the formation of correctly charged Gln-tRNA(Gln) through the transamidation of misacylated Glu-tRNA(Gln) in organisms which lack glutaminyl-tRNA synthetase. The reaction takes place in the presence of glutamine and ATP through an activated gamma-phospho-Glu-tRNA(Gln). The chain is Glutamyl-tRNA(Gln) amidotransferase subunit A from Clostridium novyi (strain NT).